The following is a 78-amino-acid chain: Large ribosomal subunit protein uL23 (78 aa).

The protein belongs to the universal ribosomal protein uL23 family. Part of the 50S ribosomal subunit. Contacts protein L29.

Functionally, binds to 23S rRNA. One of the proteins that surrounds the polypeptide exit tunnel on the outside of the ribosome. This chain is Large ribosomal subunit protein uL23, found in Nanoarchaeum equitans (strain Kin4-M).